A 179-amino-acid chain; its full sequence is Large ribosomal subunit protein uL5 (179 aa).

The protein belongs to the universal ribosomal protein uL5 family. Part of the 50S ribosomal subunit; part of the 5S rRNA/L5/L18/L25 subcomplex. Contacts the 5S rRNA and the P site tRNA. Forms a bridge to the 30S subunit in the 70S ribosome.

Its function is as follows. This is one of the proteins that bind and probably mediate the attachment of the 5S RNA into the large ribosomal subunit, where it forms part of the central protuberance. In the 70S ribosome it contacts protein S13 of the 30S subunit (bridge B1b), connecting the 2 subunits; this bridge is implicated in subunit movement. Contacts the P site tRNA; the 5S rRNA and some of its associated proteins might help stabilize positioning of ribosome-bound tRNAs. In Desulfosudis oleivorans (strain DSM 6200 / JCM 39069 / Hxd3) (Desulfococcus oleovorans), this protein is Large ribosomal subunit protein uL5.